Consider the following 194-residue polypeptide: Cathelicidin-related peptide isoform 3 (194 aa).

A signal peptide spans 1–22 (MQGFFWKTWLVLAVCGTPASLA). Positions 23–164 (HRPLSYGEAL…DQPKRVKRFK (142 aa)) are excised as a propeptide. Intrachain disulfides connect C79–C90 and C101–C118. Positions 125–145 (EEEEEEEEEEQKAEAENDEEV) are enriched in acidic residues. Residues 125 to 156 (EEEEEEEEEEQKAEAENDEEVEKEKGDEEKDQ) are disordered. The span at 146–156 (EKEKGDEEKDQ) shows a compositional bias: basic and acidic residues.

Belongs to the cathelicidin family. Expressed by the venom gland.

Its subcellular location is the secreted. The protein localises to the target cell membrane. Potent antimicrobial peptide against Gram-negative and Gram-positive bacteria. Adopts an amphipathic alpha helical conformation, that may allow to partition into the target membrane. Low hemolytic activities have been observed on mammalian cells. This is Cathelicidin-related peptide isoform 3 from Crotalus durissus cascavella (Northeastern Brazilian rattlesnake).